The sequence spans 93 residues: Small ribosomal subunit protein bS20 (93 aa).

This sequence belongs to the bacterial ribosomal protein bS20 family.

In terms of biological role, binds directly to 16S ribosomal RNA. The polypeptide is Small ribosomal subunit protein bS20 (Hydrogenobaculum sp. (strain Y04AAS1)).